We begin with the raw amino-acid sequence, 386 residues long: Cytoplasmic 60S subunit biogenesis factor ZNF622 (386 aa).

At Ala-2 the chain carries N-acetylalanine. U1-type zinc fingers lie at residues 4–28 and 67–91; these read YTCI…TDWH and TYCT…SRRH. Positions 135 to 237 are disordered; it reads AIKAQPSTSP…AEDAEAEESP (103 aa). The segment covering 165–176 has biased composition (basic and acidic residues); sequence GTPERDPTEKPP. Residues 194–235 are compositionally biased toward acidic residues; it reads EESEEEGEEDDEDWEDIDSDDGLECENPGVEEEDAEDAEAEE. At Ser-269 the chain carries Phosphoserine.

Belongs to the REI1 family. In terms of assembly, homo- and heterodimer. Associates with pre-60S ribosomal particles. Interacts with MELK and MYBL2. Interacts with DNAJC21. Post-translationally, phosphorylated by MELK. The phosphorylation may redirect the protein to the nucleus. Ubiquitinated by HECTD1, leading to its degradation.

The protein resides in the cytoplasm. The protein localises to the nucleus. Functionally, pre-60S-associated cytoplasmic factor involved in the cytoplasmic maturation of the 60S subunit. The polypeptide is Cytoplasmic 60S subunit biogenesis factor ZNF622 (Znf622) (Rattus norvegicus (Rat)).